The primary structure comprises 237 residues: uncharacterized protein (237 aa).

Residues Glu91, Glu93, and Asp122 each coordinate a divalent metal cation.

This sequence belongs to the FAH family.

This is an uncharacterized protein from Methanocaldococcus jannaschii (strain ATCC 43067 / DSM 2661 / JAL-1 / JCM 10045 / NBRC 100440) (Methanococcus jannaschii).